A 1050-amino-acid chain; its full sequence is FHIP family protein GE18198 (1050 aa).

2 positions are modified to phosphoserine: Ser498 and Ser805. Disordered stretches follow at residues 800 to 827, 865 to 888, 911 to 954, and 968 to 995; these read KGNE…GQLR, TSMF…SASS, TDGR…SGSN, and SNTT…SEPA. The segment covering 808–826 has biased composition (polar residues); the sequence is HHSQQQQMATNSGQQQGQL. Residues 872–888 show a composition bias toward low complexity; it reads SASNTSTTPPNGSSASS. Residues 918 to 935 are compositionally biased toward polar residues; sequence HAQTSAGTCETSLSTQPQ. Residues 941–954 show a composition bias toward low complexity; that stretch reads TGAIATSATASGSN. The span at 968–977 shows a compositional bias: polar residues; it reads SNTTTHSAST.

Belongs to the FHIP family.

In Drosophila yakuba (Fruit fly), this protein is FHIP family protein GE18198.